We begin with the raw amino-acid sequence, 81 residues long: Polcalcin Syr v 3 (81 aa).

2 consecutive EF-hand domains span residues 3-38 (EEVA…LGSV) and 41-73 (EEIQ…NSGL). 9 residues coordinate Ca(2+): Asp16, Asn18, Asp20, Lys22, Glu27, Asp51, Asp53, Asp55, and Glu62.

This is Polcalcin Syr v 3 (SYRV3) from Syringa vulgaris (Common lilac).